A 34-amino-acid chain; its full sequence is Phospholipase A2 (34 aa).

His18 is an active-site residue. Asp19 is a Ca(2+) binding site.

The protein belongs to the phospholipase A2 family. Group I subfamily. D49 sub-subfamily. The cofactor is Ca(2+). Post-translationally, contains 7 disulfide bonds. Expressed by the venom gland.

It is found in the secreted. The enzyme catalyses a 1,2-diacyl-sn-glycero-3-phosphocholine + H2O = a 1-acyl-sn-glycero-3-phosphocholine + a fatty acid + H(+). Its function is as follows. Snake venom phospholipase A2 (PLA2) that strongly inhibits platelet aggregation and has a strong anticoagulant activity. PLA2 catalyzes the calcium-dependent hydrolysis of the 2-acyl groups in 3-sn-phosphoglycerides. This Pseudechis papuanus (Papuan black snake) protein is Phospholipase A2.